The following is a 68-amino-acid chain: MRTSYLLLFTLCLLLSEMASGDNFLTGLGHRSDHYICVRSGGQCLYSACPIYTKIQGTCYHGKAKCCK.

The N-terminal stretch at 1 to 21 is a signal peptide; sequence MRTSYLLLFTLCLLLSEMASG. A propeptide spanning residues 22–32 is cleaved from the precursor; that stretch reads DNFLTGLGHRS. 3 disulfides stabilise this stretch: Cys37–Cys66, Cys44–Cys59, and Cys49–Cys67.

The protein belongs to the beta-defensin family. In terms of assembly, monomer. Homodimer.

It localises to the secreted. Its subcellular location is the membrane. Has bactericidal activity. May act as a ligand for C-C chemokine receptor CCR6. Positively regulates the sperm motility and bactericidal activity in a CCR6-dependent manner. Binds to CCR6 and triggers Ca2+ mobilization in the sperm which is important for its motility. This chain is Beta-defensin 1 (DEFB1), found in Cercopithecus erythrogaster (Red-bellied monkey).